The sequence spans 692 residues: Elongation factor G (692 aa).

A tr-type G domain is found at Glu-8–Leu-282. GTP-binding positions include Ala-17 to Thr-24, Asp-81 to His-85, and Asn-135 to Asp-138.

This sequence belongs to the TRAFAC class translation factor GTPase superfamily. Classic translation factor GTPase family. EF-G/EF-2 subfamily.

It is found in the cytoplasm. Catalyzes the GTP-dependent ribosomal translocation step during translation elongation. During this step, the ribosome changes from the pre-translocational (PRE) to the post-translocational (POST) state as the newly formed A-site-bound peptidyl-tRNA and P-site-bound deacylated tRNA move to the P and E sites, respectively. Catalyzes the coordinated movement of the two tRNA molecules, the mRNA and conformational changes in the ribosome. The protein is Elongation factor G of Bacillus cereus (strain ATCC 14579 / DSM 31 / CCUG 7414 / JCM 2152 / NBRC 15305 / NCIMB 9373 / NCTC 2599 / NRRL B-3711).